A 160-amino-acid polypeptide reads, in one-letter code: Crossover junction endodeoxyribonuclease RuvC (160 aa).

Residues D9, E68, and D141 contribute to the active site. Residues D9, E68, and D141 each contribute to the Mg(2+) site.

The protein belongs to the RuvC family. As to quaternary structure, homodimer which binds Holliday junction (HJ) DNA. The HJ becomes 2-fold symmetrical on binding to RuvC with unstacked arms; it has a different conformation from HJ DNA in complex with RuvA. In the full resolvosome a probable DNA-RuvA(4)-RuvB(12)-RuvC(2) complex forms which resolves the HJ. Mg(2+) serves as cofactor.

It localises to the cytoplasm. The enzyme catalyses Endonucleolytic cleavage at a junction such as a reciprocal single-stranded crossover between two homologous DNA duplexes (Holliday junction).. In terms of biological role, the RuvA-RuvB-RuvC complex processes Holliday junction (HJ) DNA during genetic recombination and DNA repair. Endonuclease that resolves HJ intermediates. Cleaves cruciform DNA by making single-stranded nicks across the HJ at symmetrical positions within the homologous arms, yielding a 5'-phosphate and a 3'-hydroxyl group; requires a central core of homology in the junction. The consensus cleavage sequence is 5'-(A/T)TT(C/G)-3'. Cleavage occurs on the 3'-side of the TT dinucleotide at the point of strand exchange. HJ branch migration catalyzed by RuvA-RuvB allows RuvC to scan DNA until it finds its consensus sequence, where it cleaves and resolves the cruciform DNA. This chain is Crossover junction endodeoxyribonuclease RuvC, found in Campylobacter jejuni subsp. jejuni serotype O:2 (strain ATCC 700819 / NCTC 11168).